The following is a 252-amino-acid chain: Bidirectional sugar transporter SWEET3b (252 aa).

At 1-8 the chain is on the extracellular side; it reads MVSNTIRV. Residues 9-29 form a helical membrane-spanning segment; it reads AVGILGNAASMLLYAAPILTF. The MtN3/slv 1 domain occupies 10-98; the sequence is VGILGNAASM…SIYTWFAPRE (89 aa). The Cytoplasmic portion of the chain corresponds to 30-43; it reads RRVIKKGSVEEFSC. Residues 44–64 traverse the membrane as a helical segment; it reads VPYILALFNCLLYTWYGLPVV. The Extracellular portion of the chain corresponds to 65–75; it reads SSGWENSTVSS. N-linked (GlcNAc...) asparagine glycosylation occurs at N70. Residues 76–96 form a helical membrane-spanning segment; it reads INGLGILLEIAFISIYTWFAP. The Cytoplasmic portion of the chain corresponds to 97-105; that stretch reads RERKKFVLR. The helical transmembrane segment at 106-126 threads the bilayer; it reads MVLPVLAFFALTAIFSSFLFH. Residues 127 to 132 lie on the Extracellular side of the membrane; it reads THGLRK. Residues 133 to 153 traverse the membrane as a helical segment; the sequence is VFVGSIGLVASISMYSSPMVA. Residues 134-219 enclose the MtN3/slv 2 domain; sequence FVGSIGLVAS…LYCIYRKSHK (86 aa). Residues 154–167 are Cytoplasmic-facing; sequence AKQVITTKSVEFMP. Residues 168–188 traverse the membrane as a helical segment; it reads FYLSLFSFLSSALWMIYGLLG. At 189–190 the chain is on the extracellular side; it reads KD. Residues 191–211 form a helical membrane-spanning segment; sequence LFIASPNFIGCPMGILQLVLY. Over 212-252 the chain is Cytoplasmic; the sequence is CIYRKSHKEAEKLHDIDQENGLKVVTTHEKITGREPEAQRD.

The protein belongs to the SWEET sugar transporter family. As to quaternary structure, forms homooligomers and/or heterooligomers.

The protein localises to the cell membrane. In terms of biological role, mediates both low-affinity uptake and efflux of sugar across the plasma membrane. This chain is Bidirectional sugar transporter SWEET3b (SWEET3B), found in Oryza sativa subsp. japonica (Rice).